A 515-amino-acid polypeptide reads, in one-letter code: Leucine-rich repeat transmembrane neuronal protein 2 (515 aa).

The signal sequence occupies residues 1-33 (MGLHFKWPLGAPMLAAIYAMSVVLKMLPALGMA). Residues 34–421 (CPPKCRCEKL…EPDNAIFTQR (388 aa)) are Extracellular-facing. An N-linked (GlcNAc...) asparagine glycan is attached at asparagine 57. 10 LRR repeats span residues 61–83 (KGSLGLSLRHNHITALERDQFAS), 84–107 (FSQLTWLHLDHNQISTVKEDAFQG), 109–131 (YKLKELILSSNKIFYLPNTTFTQ), 132–155 (LINLQNLDLSFNQLSSLHPELFYG), 156–179 (LRKLQTLHLRSNSLRTIPVRLFWD), 181–203 (RSLEFLDLSTNRLRSLARNGFAG), 205–227 (IKLRELHLEHNQLTKINFAHFLR), 229–251 (SSLHTLFLQWNKISNLTCGMEWT), 252–275 (WSTLEKLDLTGNEIKAIDLTVFET), and 276–299 (MPNLKILLMDNNKLNSLDSKILSS). A glycan (N-linked (GlcNAc...) asparagine) is linked at asparagine 126. An N-linked (GlcNAc...) asparagine glycan is attached at asparagine 243. The N-linked (GlcNAc...) asparagine glycan is linked to asparagine 362. The helical transmembrane segment at 422 to 442 (VITGTMALLFSFFFIIFIVFI) threads the bilayer. Residues 443–515 (SRKCCPPTLR…QQLPYKECEV (73 aa)) lie on the Cytoplasmic side of the membrane. An Involved in DLG4-binding motif is present at residues 512-515 (ECEV).

The protein belongs to the LRRTM family. In terms of assembly, interacts with DLG4. Interacts with neurexin NRXN1; interaction is mediated by heparan sulfate glycan modification on neurexin. As to expression, expressed in neuronal tissues. Widely distributed in neuropil regions in discrete puncta throughout the brain (at protein level). Detected in cortex, thalamus, striatum, olfactory bulb, cerebellum and all hippocampal subfields (at protein level). More abundant in deep than in superficial layers of neocortex (at protein level).

It localises to the cell membrane. The protein localises to the postsynaptic cell membrane. Involved in the development and maintenance of excitatory synapses in the nervous system. Regulates surface expression of AMPA receptors and instructs the development of functional glutamate release sites. Acts as a ligand for the presynaptic receptors NRXN1-A and NRXN1-B. The polypeptide is Leucine-rich repeat transmembrane neuronal protein 2 (Lrrtm2) (Rattus norvegicus (Rat)).